Consider the following 119-residue polypeptide: Protein sigma-1-small (119 aa).

It belongs to the orthoreovirus sigma-1s protein family.

The sequence is that of Protein sigma-1-small (S1) from Mammalia (T1L).